The chain runs to 599 residues: Phosphomethylpyrimidine synthase (599 aa).

The span at 1–16 (MSAASANSVTNPSAWE) shows a compositional bias: polar residues. Disordered stretches follow at residues 1-53 (MSAA…PNDP) and 82-108 (EDTE…GAAS). Over residues 87 to 100 (YAGRERNLADDGRS) the composition is skewed to basic and acidic residues. Substrate-binding positions include asparagine 192, methionine 221, tyrosine 250, histidine 286, 306 to 308 (SRG), 347 to 350 (DGLR), and glutamate 386. Histidine 390 is a binding site for Zn(2+). Tyrosine 413 is a binding site for substrate. Residue histidine 454 participates in Zn(2+) binding. 3 residues coordinate [4Fe-4S] cluster: cysteine 534, cysteine 537, and cysteine 542.

It belongs to the ThiC family. Requires [4Fe-4S] cluster as cofactor.

It catalyses the reaction 5-amino-1-(5-phospho-beta-D-ribosyl)imidazole + S-adenosyl-L-methionine = 4-amino-2-methyl-5-(phosphooxymethyl)pyrimidine + CO + 5'-deoxyadenosine + formate + L-methionine + 3 H(+). The protein operates within cofactor biosynthesis; thiamine diphosphate biosynthesis. In terms of biological role, catalyzes the synthesis of the hydroxymethylpyrimidine phosphate (HMP-P) moiety of thiamine from aminoimidazole ribotide (AIR) in a radical S-adenosyl-L-methionine (SAM)-dependent reaction. This is Phosphomethylpyrimidine synthase from Corynebacterium diphtheriae (strain ATCC 700971 / NCTC 13129 / Biotype gravis).